The chain runs to 310 residues: MVKVYAPASSANMSVGFDVLGAAVTPVDGALLGDVVTVEAAETFSLNNLGRFADKLPSEPRENIVYQCWERFCQELGKQIPVAMTLEKNMPIGSGLGSSACSVVAALMAMNEHCGKPLNDTRLLALMGELEGRISGSIHYDNVAPCFLGGMQLMIEENDIISQQVPGFDEWLWVLAYPGIKVSTAEARAILPAQYRRQDCIAHGRHLAGFIHACYSRQLELAAKLMKDVIAEPYRERLLPGFRQARQAVAEIGAVASGISGSGPTLFALCDKPDTAQRVADWLGKNYLQNQEGFVHICRLDTAGARVLEN.

91–101 (PIGSGLGSSAC) provides a ligand contact to ATP.

This sequence belongs to the GHMP kinase family. Homoserine kinase subfamily.

The protein resides in the cytoplasm. The catalysed reaction is L-homoserine + ATP = O-phospho-L-homoserine + ADP + H(+). It functions in the pathway amino-acid biosynthesis; L-threonine biosynthesis; L-threonine from L-aspartate: step 4/5. In terms of biological role, catalyzes the ATP-dependent phosphorylation of L-homoserine to L-homoserine phosphate. In Escherichia coli O6:K15:H31 (strain 536 / UPEC), this protein is Homoserine kinase.